A 134-amino-acid polypeptide reads, in one-letter code: Acyl carrier protein, chloroplastic (134 aa).

The N-terminal 51 residues, Met-1–Cys-51, are a transit peptide targeting the chloroplast. The 76-residue stretch at Pro-55–Val-130 folds into the Carrier domain. Position 90 is an O-(pantetheine 4'-phosphoryl)serine (Ser-90).

Belongs to the acyl carrier protein (ACP) family. In terms of processing, 4'-phosphopantetheine is transferred from CoA to a specific serine of apo-ACP by acpS. This modification is essential for activity because fatty acids are bound in thioester linkage to the sulfhydryl of the prosthetic group. Seed.

It is found in the plastid. The protein resides in the chloroplast. It functions in the pathway lipid metabolism; fatty acid biosynthesis. In terms of biological role, carrier of the growing fatty acid chain in fatty acid biosynthesis. This is Acyl carrier protein, chloroplastic (ACL1.A2) from Brassica napus (Rape).